Here is a 979-residue protein sequence, read N- to C-terminus: DNA ligase 4 (979 aa).

Residues 1–39 (MDSDEIMPDEEHPNVPVGDEESDIDEKYPNRPRNHSPTL) are disordered. 10 residues coordinate ATP: E320, K322, L323, R327, E389, F430, E490, K495, K512, and K514. The active-site N6-AMP-lysine intermediate is K322. Residue E389 coordinates Mg(2+). Residue E490 participates in Mg(2+) binding. BRCT domains follow at residues 721–814 (PSGH…PDFL) and 867–965 (LQES…RFQP).

It belongs to the ATP-dependent DNA ligase family. Mg(2+) is required as a cofactor.

The protein resides in the nucleus. It carries out the reaction ATP + (deoxyribonucleotide)n-3'-hydroxyl + 5'-phospho-(deoxyribonucleotide)m = (deoxyribonucleotide)n+m + AMP + diphosphate.. DNA ligase involved in DNA non-homologous end joining (NHEJ); required for double-strand break (DSB) repair. This Aspergillus fumigatus (strain ATCC MYA-4609 / CBS 101355 / FGSC A1100 / Af293) (Neosartorya fumigata) protein is DNA ligase 4 (lig4).